We begin with the raw amino-acid sequence, 452 residues long: Phosphoglucosamine mutase (452 aa).

Catalysis depends on Ser112, which acts as the Phosphoserine intermediate. Residues Ser112, Asp251, Asp253, and Asp255 each coordinate Mg(2+). Phosphoserine is present on Ser112.

It belongs to the phosphohexose mutase family. Mg(2+) is required as a cofactor. Activated by phosphorylation.

The catalysed reaction is alpha-D-glucosamine 1-phosphate = D-glucosamine 6-phosphate. Its function is as follows. Catalyzes the conversion of glucosamine-6-phosphate to glucosamine-1-phosphate. The polypeptide is Phosphoglucosamine mutase (Bordetella bronchiseptica (strain ATCC BAA-588 / NCTC 13252 / RB50) (Alcaligenes bronchisepticus)).